Here is a 726-residue protein sequence, read N- to C-terminus: Catalase-peroxidase (726 aa).

The tryptophyl-tyrosyl-methioninium (Trp-Tyr) (with M-252) cross-link spans 98 to 226 (WHSAGTYRMQ…LAAVHMGLIY (129 aa)). Residue His-99 is the Proton acceptor of the active site. Positions 226 to 252 (YVNPEGVNGQPDPARTAQHVRETFARM) form a cross-link, tryptophyl-tyrosyl-methioninium (Tyr-Met) (with W-98). Heme b is bound at residue His-267.

Belongs to the peroxidase family. Peroxidase/catalase subfamily. Homodimer or homotetramer. The cofactor is heme b. Formation of the three residue Trp-Tyr-Met cross-link is important for the catalase, but not the peroxidase activity of the enzyme.

It catalyses the reaction H2O2 + AH2 = A + 2 H2O. The catalysed reaction is 2 H2O2 = O2 + 2 H2O. Its function is as follows. Bifunctional enzyme with both catalase and broad-spectrum peroxidase activity. This Roseobacter denitrificans (strain ATCC 33942 / OCh 114) (Erythrobacter sp. (strain OCh 114)) protein is Catalase-peroxidase.